Here is a 94-residue protein sequence, read N- to C-terminus: Small ribosomal subunit protein uS19 (94 aa).

This sequence belongs to the universal ribosomal protein uS19 family.

Protein S19 forms a complex with S13 that binds strongly to the 16S ribosomal RNA. In Pelotomaculum thermopropionicum (strain DSM 13744 / JCM 10971 / SI), this protein is Small ribosomal subunit protein uS19.